Reading from the N-terminus, the 199-residue chain is RNA-binding protein, mRNA-processing factor 2a (199 aa).

The RRM domain maps to 20–97; the sequence is RTLFVSGLPV…QTLRLEFAKA (78 aa).

In terms of assembly, interacts with Bucky ball (BUC); to mediate Balbiani body formation and oocyte polarity during early oogenesis.

It is found in the cytoplasm. The protein resides in the nucleus. The protein localises to the stress granule. RNA-binding protein involved in the regulation of smooth muscle cell differentiation and proliferation in the gastrointestinal system. RNA-binding protein localized in Balbiani body (electron-dense aggregates in the oocyte) and germ plasm during oogenesis, and may be required to maintain germ plasm mRNA translational repression. Translational regulator during topographic map formation in the visual system. Establishes oocyte polarity through interaction with Bucky ball (BUC). Acts as a pre-mRNA alternative splicing regulator. Mediates ACTN1 and FLNB alternative splicing. Likely binds to mRNA tandem CAC trinucleotide or CA dinucleotide motifs. This Danio rerio (Zebrafish) protein is RNA-binding protein, mRNA-processing factor 2a.